The sequence spans 241 residues: Eukaryotic translation initiation factor 3 subunit J (241 aa).

The tract at residues 1–94 (MDVSWDADNF…EKTAEEMTPE (94 aa)) is disordered. Over residues 26 to 45 (GEDEDDNVKESWEDEEEEKK) the composition is skewed to acidic residues. A coiled-coil region spans residues 61–118 (KKKIHDKIAERERQEREKAERLVTEKTAEEMTPEQKLAEKLRQQKLQEESDLRLAMET). Residues 66-89 (DKIAERERQEREKAERLVTEKTAE) show a composition bias toward basic and acidic residues.

The protein belongs to the eIF-3 subunit J family. In terms of assembly, component of the eukaryotic translation initiation factor 3 (eIF-3) complex.

The protein resides in the cytoplasm. In terms of biological role, component of the eukaryotic translation initiation factor 3 (eIF-3) complex, which is involved in protein synthesis of a specialized repertoire of mRNAs and, together with other initiation factors, stimulates binding of mRNA and methionyl-tRNAi to the 40S ribosome. The eIF-3 complex specifically targets and initiates translation of a subset of mRNAs involved in cell proliferation. The protein is Eukaryotic translation initiation factor 3 subunit J of Bombyx mori (Silk moth).